Here is a 563-residue protein sequence, read N- to C-terminus: Cytidine monophosphate-N-acetylneuraminic acid hydroxylase (563 aa).

The Rieske domain occupies 10–108; sequence LSPAETANLK…VEMDGNDGLF (99 aa). Residues Cys-50, His-52, Cys-71, and His-74 each contribute to the [2Fe-2S] cluster site.

It belongs to the CMP-Neu5Ac hydroxylase family. The cofactor is [2Fe-2S] cluster.

The protein resides in the cytoplasm. The enzyme catalyses CMP-N-acetyl-beta-neuraminate + 2 Fe(II)-[cytochrome b5] + O2 + 2 H(+) = CMP-N-glycoloyl-beta-neuraminate + 2 Fe(III)-[cytochrome b5] + H2O. Its pathway is amino-sugar metabolism; N-acetylneuraminate metabolism. Functionally, sialic acids are components of carbohydrate chains of glycoconjugates and are involved in cell-cell recognition and cell-pathogen interactions. Catalyzes the conversion of CMP-N-acetylneuraminic acid (CMP-Neu5Ac) into its hydroxylated derivative CMP-N-glycolylneuraminic acid (CMP-Neu5Gc), a sialic acid abundantly expressed at the surface of many cells. The sequence is that of Cytidine monophosphate-N-acetylneuraminic acid hydroxylase (CMAH) from Cricetulus griseus (Chinese hamster).